We begin with the raw amino-acid sequence, 155 residues long: Small ribosomal subunit protein uS7 (155 aa).

The protein belongs to the universal ribosomal protein uS7 family. Part of the 30S ribosomal subunit. Contacts proteins S9 and S11.

Its function is as follows. One of the primary rRNA binding proteins, it binds directly to 16S rRNA where it nucleates assembly of the head domain of the 30S subunit. Is located at the subunit interface close to the decoding center, probably blocks exit of the E-site tRNA. The sequence is that of Small ribosomal subunit protein uS7 from Halorhodospira halophila (strain DSM 244 / SL1) (Ectothiorhodospira halophila (strain DSM 244 / SL1)).